A 449-amino-acid chain; its full sequence is Bifunctional protein GlmU (449 aa).

Positions 1 to 226 (MVAVAILAAG…FQEISGINDR (226 aa)) are pyrophosphorylase. UDP-N-acetyl-alpha-D-glucosamine contacts are provided by residues 7–10 (LAAG), Lys21, Gln73, and 78–79 (GT). Residue Asp103 coordinates Mg(2+). Residues Gly140, Glu155, Asn170, and Asn224 each coordinate UDP-N-acetyl-alpha-D-glucosamine. A Mg(2+)-binding site is contributed by Asn224. The segment at 227–247 (FQLSAAYEILQDRIKEKWMKA) is linker. Residues 248-449 (GVMIHQPDTV…KEIKGWRLQS (202 aa)) form an N-acetyltransferase region. UDP-N-acetyl-alpha-D-glucosamine-binding residues include Arg329 and Lys347. The active-site Proton acceptor is His359. Residues Tyr362 and Asn373 each contribute to the UDP-N-acetyl-alpha-D-glucosamine site. Acetyl-CoA is bound by residues Ala376, 382–383 (NY), Ala419, and Arg436.

The protein in the N-terminal section; belongs to the N-acetylglucosamine-1-phosphate uridyltransferase family. It in the C-terminal section; belongs to the transferase hexapeptide repeat family. As to quaternary structure, homotrimer. It depends on Mg(2+) as a cofactor.

It localises to the cytoplasm. The enzyme catalyses alpha-D-glucosamine 1-phosphate + acetyl-CoA = N-acetyl-alpha-D-glucosamine 1-phosphate + CoA + H(+). It catalyses the reaction N-acetyl-alpha-D-glucosamine 1-phosphate + UTP + H(+) = UDP-N-acetyl-alpha-D-glucosamine + diphosphate. The protein operates within nucleotide-sugar biosynthesis; UDP-N-acetyl-alpha-D-glucosamine biosynthesis; N-acetyl-alpha-D-glucosamine 1-phosphate from alpha-D-glucosamine 6-phosphate (route II): step 2/2. Its pathway is nucleotide-sugar biosynthesis; UDP-N-acetyl-alpha-D-glucosamine biosynthesis; UDP-N-acetyl-alpha-D-glucosamine from N-acetyl-alpha-D-glucosamine 1-phosphate: step 1/1. It participates in bacterial outer membrane biogenesis; LPS lipid A biosynthesis. Catalyzes the last two sequential reactions in the de novo biosynthetic pathway for UDP-N-acetylglucosamine (UDP-GlcNAc). The C-terminal domain catalyzes the transfer of acetyl group from acetyl coenzyme A to glucosamine-1-phosphate (GlcN-1-P) to produce N-acetylglucosamine-1-phosphate (GlcNAc-1-P), which is converted into UDP-GlcNAc by the transfer of uridine 5-monophosphate (from uridine 5-triphosphate), a reaction catalyzed by the N-terminal domain. The protein is Bifunctional protein GlmU of Picosynechococcus sp. (strain ATCC 27264 / PCC 7002 / PR-6) (Agmenellum quadruplicatum).